We begin with the raw amino-acid sequence, 440 residues long: Xylose isomerase (440 aa).

Catalysis depends on residues His-100 and Asp-103. Glu-231, Glu-267, His-270, Asp-295, Asp-306, Asp-308, and Asp-338 together coordinate Mg(2+).

It belongs to the xylose isomerase family. As to quaternary structure, homotetramer. Mg(2+) serves as cofactor.

It is found in the cytoplasm. The enzyme catalyses alpha-D-xylose = alpha-D-xylulofuranose. This Burkholderia cenocepacia (strain ATCC BAA-245 / DSM 16553 / LMG 16656 / NCTC 13227 / J2315 / CF5610) (Burkholderia cepacia (strain J2315)) protein is Xylose isomerase.